The sequence spans 308 residues: HTH-type transcriptional activator AllS (308 aa).

The HTH lysR-type domain occupies 2-59 (FDPETLRTFIAVAETGSFSKAAERLCKTTATISYRIKLLEENTGVALFFRTTRSVTLT). A DNA-binding region (H-T-H motif) is located at residues 19–38 (FSKAAERLCKTTATISYRIK).

It belongs to the LysR transcriptional regulatory family.

Functionally, positive regulator essential for the expression of AllD operon. Binds to the AllD promoter. This chain is HTH-type transcriptional activator AllS (allS), found in Escherichia coli O157:H7.